The sequence spans 211 residues: dITP/XTP pyrophosphatase (211 aa).

7–12 contacts substrate; the sequence is TSNKKK. 2 residues coordinate Mg(2+): glutamate 43 and aspartate 72. Aspartate 72 acts as the Proton acceptor in catalysis. Substrate-binding positions include serine 73, 169-172, lysine 190, and 195-196; these read FGYD and HR.

Belongs to the HAM1 NTPase family. Homodimer. The cofactor is Mg(2+).

The enzyme catalyses XTP + H2O = XMP + diphosphate + H(+). The catalysed reaction is dITP + H2O = dIMP + diphosphate + H(+). It catalyses the reaction ITP + H2O = IMP + diphosphate + H(+). In terms of biological role, pyrophosphatase that catalyzes the hydrolysis of nucleoside triphosphates to their monophosphate derivatives, with a high preference for the non-canonical purine nucleotides XTP (xanthosine triphosphate), dITP (deoxyinosine triphosphate) and ITP. Seems to function as a house-cleaning enzyme that removes non-canonical purine nucleotides from the nucleotide pool, thus preventing their incorporation into DNA/RNA and avoiding chromosomal lesions. The protein is dITP/XTP pyrophosphatase of Hydrogenobaculum sp. (strain Y04AAS1).